Here is a 285-residue protein sequence, read N- to C-terminus: Nucleotide-binding protein Geob_2284 (285 aa).

8–15 lines the ATP pocket; it reads GLSGSGKS. 59–62 is a GTP binding site; the sequence is DIRG.

This sequence belongs to the RapZ-like family.

Functionally, displays ATPase and GTPase activities. In Geotalea daltonii (strain DSM 22248 / JCM 15807 / FRC-32) (Geobacter daltonii), this protein is Nucleotide-binding protein Geob_2284.